Consider the following 294-residue polypeptide: MFRGVGTAIVTPFKNGELDLEAYERLVRYQLDGGVSALIVLGTTGEAPTVNDDERERLVSKTLEIVDGKIPVIVGAGTNSTEKTLKLVKQAEKLGADGVLIVTPYYNKPTQEGLYQHYKYISERTDLKIIVYNVPGRTGVNVLPETAARIASDLKNVVGIKEANGDIDQIDRTVTLTKSARSDFMVWSGNDDRTFYLLCAGGDGVISVVSNVAPKQMSDLCAEFFSGNIEKAREIHRKLRPLMKALFVETNPIPVKAALSLMGYVENELRLPLVPASEKTVELLKGVLRESGLL.

Threonine 44 contacts pyruvate. Catalysis depends on tyrosine 132, which acts as the Proton donor/acceptor. Lysine 161 acts as the Schiff-base intermediate with substrate in catalysis. Isoleucine 206 provides a ligand contact to pyruvate.

It belongs to the DapA family. Homotetramer; dimer of dimers.

Its subcellular location is the cytoplasm. It carries out the reaction L-aspartate 4-semialdehyde + pyruvate = (2S,4S)-4-hydroxy-2,3,4,5-tetrahydrodipicolinate + H2O + H(+). Its pathway is amino-acid biosynthesis; L-lysine biosynthesis via DAP pathway; (S)-tetrahydrodipicolinate from L-aspartate: step 3/4. Functionally, catalyzes the condensation of (S)-aspartate-beta-semialdehyde [(S)-ASA] and pyruvate to 4-hydroxy-tetrahydrodipicolinate (HTPA). This chain is 4-hydroxy-tetrahydrodipicolinate synthase, found in Thermotoga neapolitana (strain ATCC 49049 / DSM 4359 / NBRC 107923 / NS-E).